The sequence spans 306 residues: tRNA-cytidine(32) 2-sulfurtransferase (306 aa).

The PP-loop motif signature appears at 44–49 (SGGKDS). Residues Cys-119, Cys-122, and Cys-210 each coordinate [4Fe-4S] cluster.

It belongs to the TtcA family. Homodimer. Requires Mg(2+) as cofactor. [4Fe-4S] cluster serves as cofactor.

Its subcellular location is the cytoplasm. The enzyme catalyses cytidine(32) in tRNA + S-sulfanyl-L-cysteinyl-[cysteine desulfurase] + AH2 + ATP = 2-thiocytidine(32) in tRNA + L-cysteinyl-[cysteine desulfurase] + A + AMP + diphosphate + H(+). It functions in the pathway tRNA modification. Functionally, catalyzes the ATP-dependent 2-thiolation of cytidine in position 32 of tRNA, to form 2-thiocytidine (s(2)C32). The sulfur atoms are provided by the cysteine/cysteine desulfurase (IscS) system. The chain is tRNA-cytidine(32) 2-sulfurtransferase from Photorhabdus laumondii subsp. laumondii (strain DSM 15139 / CIP 105565 / TT01) (Photorhabdus luminescens subsp. laumondii).